Consider the following 304-residue polypeptide: Energy-coupling factor transporter ATP-binding protein EcfA2 (304 aa).

An ABC transporter domain is found at 3 to 261 (IIVKNISYIY…EKFLVENKLK (259 aa)). 40 to 47 (GSTGSGKT) is an ATP binding site.

The protein belongs to the ABC transporter superfamily. Energy-coupling factor EcfA family. In terms of assembly, forms a stable energy-coupling factor (ECF) transporter complex composed of 2 membrane-embedded substrate-binding proteins (S component), 2 ATP-binding proteins (A component) and 2 transmembrane proteins (T component).

It is found in the cell membrane. In terms of biological role, ATP-binding (A) component of a common energy-coupling factor (ECF) ABC-transporter complex. Unlike classic ABC transporters this ECF transporter provides the energy necessary to transport a number of different substrates. This is Energy-coupling factor transporter ATP-binding protein EcfA2 from Mycoplasmopsis pulmonis (strain UAB CTIP) (Mycoplasma pulmonis).